We begin with the raw amino-acid sequence, 208 residues long: Probable GTP-binding protein EngB (208 aa).

Positions L23–T205 constitute an EngB-type G domain. GTP-binding positions include G31 to S38, G57 to L61, D84 to G87, T154 to D157, and F182 to A184. Residues S38 and T59 each coordinate Mg(2+).

It belongs to the TRAFAC class TrmE-Era-EngA-EngB-Septin-like GTPase superfamily. EngB GTPase family. It depends on Mg(2+) as a cofactor.

Its function is as follows. Necessary for normal cell division and for the maintenance of normal septation. The sequence is that of Probable GTP-binding protein EngB from Helicobacter pylori (strain ATCC 700392 / 26695) (Campylobacter pylori).